The following is a 257-amino-acid chain: Ditrans,polycis-undecaprenyl-diphosphate synthase ((2E,6E)-farnesyl-diphosphate specific) (257 aa).

Residue Asp-34 is part of the active site. Asp-34 serves as a coordination point for Mg(2+). Residues 35–38 (GNGR), Trp-39, Arg-47, and His-51 contribute to the substrate site. Asn-82 serves as the catalytic Proton acceptor. Residues Trp-83, Arg-85, Arg-201, and 207 to 209 (RLS) contribute to the substrate site. Position 220 (Glu-220) interacts with Mg(2+).

Belongs to the UPP synthase family. In terms of assembly, homodimer. Mg(2+) is required as a cofactor.

It carries out the reaction 8 isopentenyl diphosphate + (2E,6E)-farnesyl diphosphate = di-trans,octa-cis-undecaprenyl diphosphate + 8 diphosphate. In terms of biological role, catalyzes the sequential condensation of isopentenyl diphosphate (IPP) with (2E,6E)-farnesyl diphosphate (E,E-FPP) to yield (2Z,6Z,10Z,14Z,18Z,22Z,26Z,30Z,34E,38E)-undecaprenyl diphosphate (di-trans,octa-cis-UPP). UPP is the precursor of glycosyl carrier lipid in the biosynthesis of bacterial cell wall polysaccharide components such as peptidoglycan and lipopolysaccharide. The chain is Ditrans,polycis-undecaprenyl-diphosphate synthase ((2E,6E)-farnesyl-diphosphate specific) from Francisella tularensis subsp. tularensis (strain SCHU S4 / Schu 4).